A 523-amino-acid chain; its full sequence is Cyclin-dependent kinase 17 (523 aa).

At S9 the chain carries Phosphoserine. The segment at 30–55 (TIEESSSKDNEPIVKNGRPPTSHSVH) is disordered. Residues S80, S92, and S105 each carry the phosphoserine modification. The tract at residues 103 to 123 (MGSDGESDQASGTSSDEVQSP) is disordered. Over residues 110 to 123 (DQASGTSSDEVQSP) the composition is skewed to polar residues. Residues S137, S146, S165, and S180 each carry the phosphoserine modification. A Protein kinase domain is found at 192 to 473 (YIKLEKLGEG…AEEAMKHVYF (282 aa)). Residues 198 to 206 (LGEGTYATV) and K221 each bind ATP. D313 functions as the Proton acceptor in the catalytic mechanism. A disordered region spans residues 501–523 (PGFRNSSYPETGHGKNRRQSMLF). Over residues 514 to 523 (GKNRRQSMLF) the composition is skewed to basic residues.

This sequence belongs to the protein kinase superfamily. CMGC Ser/Thr protein kinase family. CDC2/CDKX subfamily. In terms of assembly, found in a complex containing CABLES1, CDK16 and TDRD7. Interacts with TDRD7.

It carries out the reaction L-seryl-[protein] + ATP = O-phospho-L-seryl-[protein] + ADP + H(+). It catalyses the reaction L-threonyl-[protein] + ATP = O-phospho-L-threonyl-[protein] + ADP + H(+). Functionally, may play a role in terminally differentiated neurons. Has a Ser/Thr-phosphorylating activity for histone H1. The sequence is that of Cyclin-dependent kinase 17 (Cdk17) from Mus musculus (Mouse).